Here is a 240-residue protein sequence, read N- to C-terminus: UDP-2,3-diacylglucosamine hydrolase (240 aa).

Mn(2+) is bound by residues Asp9, His11, Asp43, Asn81, and His116. 81–82 serves as a coordination point for substrate; the sequence is NR. Residues Asp124, Ser162, Lys166, Lys169, and His197 each contribute to the substrate site. Residues His197 and His199 each coordinate Mn(2+).

This sequence belongs to the LpxH family. Mn(2+) is required as a cofactor.

It is found in the cell inner membrane. The catalysed reaction is UDP-2-N,3-O-bis[(3R)-3-hydroxytetradecanoyl]-alpha-D-glucosamine + H2O = 2-N,3-O-bis[(3R)-3-hydroxytetradecanoyl]-alpha-D-glucosaminyl 1-phosphate + UMP + 2 H(+). It participates in glycolipid biosynthesis; lipid IV(A) biosynthesis; lipid IV(A) from (3R)-3-hydroxytetradecanoyl-[acyl-carrier-protein] and UDP-N-acetyl-alpha-D-glucosamine: step 4/6. Its function is as follows. Hydrolyzes the pyrophosphate bond of UDP-2,3-diacylglucosamine to yield 2,3-diacylglucosamine 1-phosphate (lipid X) and UMP by catalyzing the attack of water at the alpha-P atom. Involved in the biosynthesis of lipid A, a phosphorylated glycolipid that anchors the lipopolysaccharide to the outer membrane of the cell. The chain is UDP-2,3-diacylglucosamine hydrolase from Neisseria meningitidis serogroup A / serotype 4A (strain DSM 15465 / Z2491).